Consider the following 360-residue polypeptide: Phenylalanine--tRNA ligase alpha subunit (360 aa).

Glu-260 lines the Mg(2+) pocket.

This sequence belongs to the class-II aminoacyl-tRNA synthetase family. Phe-tRNA synthetase alpha subunit type 1 subfamily. Tetramer of two alpha and two beta subunits. Mg(2+) serves as cofactor.

The protein localises to the cytoplasm. The enzyme catalyses tRNA(Phe) + L-phenylalanine + ATP = L-phenylalanyl-tRNA(Phe) + AMP + diphosphate + H(+). This Paracoccus denitrificans (strain Pd 1222) protein is Phenylalanine--tRNA ligase alpha subunit.